A 272-amino-acid chain; its full sequence is Tropinone reductase-like 1 (272 aa).

Residue 17–41 coordinates NAD(+); it reads IITGGASGIGACTAELFHENGAKVV. A substrate-binding site is contributed by Ser150. Tyr163 functions as the Proton acceptor in the catalytic mechanism.

Belongs to the short-chain dehydrogenases/reductases (SDR) family.

In terms of biological role, has no tropinone reductase activity. This is Tropinone reductase-like 1 from Erythroxylum coca (Coca plant).